We begin with the raw amino-acid sequence, 510 residues long: uncharacterized protein (510 aa).

The next 12 membrane-spanning stretches (helical) occupy residues 17–37 (LKLG…LVVL), 56–76 (LIIH…ASVW), 111–131 (VLYI…ISPL), 148–168 (IVFI…AINI), 180–200 (LVNV…VCFG), 223–243 (LLFW…LIFI), 261–281 (FYLF…FGHI), 300–320 (YLGG…LVLM), 355–375 (IIKT…LIAI), 382–402 (LVIP…CMGY), 434–454 (AIYL…FSGI), and 472–492 (LLMG…LMFV).

It to A.aeolicus AQ_155.

It is found in the cell membrane. This is an uncharacterized protein from Rickettsia prowazekii (strain Madrid E).